A 217-amino-acid chain; its full sequence is Adenylate kinase (217 aa).

Glycine 10–threonine 15 is a binding site for ATP. The NMP stretch occupies residues serine 30–valine 59. AMP-binding positions include threonine 31, arginine 36, leucine 57–valine 59, glycine 85–arginine 88, and glutamine 92. An LID region spans residues glycine 126–aspartate 163. Arginine 127 is an ATP binding site. 2 residues coordinate Zn(2+): cysteine 130 and cysteine 133. Threonine 136–tyrosine 137 provides a ligand contact to ATP. The Zn(2+) site is built by cysteine 150 and cysteine 153. AMP-binding residues include arginine 160 and arginine 171. Lysine 199 provides a ligand contact to ATP.

Belongs to the adenylate kinase family. As to quaternary structure, monomer.

It localises to the cytoplasm. The enzyme catalyses AMP + ATP = 2 ADP. The protein operates within purine metabolism; AMP biosynthesis via salvage pathway; AMP from ADP: step 1/1. In terms of biological role, catalyzes the reversible transfer of the terminal phosphate group between ATP and AMP. Plays an important role in cellular energy homeostasis and in adenine nucleotide metabolism. The polypeptide is Adenylate kinase (Lachnoclostridium phytofermentans (strain ATCC 700394 / DSM 18823 / ISDg) (Clostridium phytofermentans)).